Consider the following 424-residue polypeptide: Phosphoprotein associated with glycosphingolipid-enriched microdomains 1 (424 aa).

The Extracellular portion of the chain corresponds to 1-17; that stretch reads MGPAGSALSSGQMQMQM. The chain crosses the membrane as a helical; Signal-anchor for type III membrane protein span at residues 18–38; the sequence is VLWGSLAAVAMFFLITFLILL. Residues cysteine 39 and cysteine 42 are each lipidated (S-palmitoyl cysteine). The Cytoplasmic segment spans residues 39–424; that stretch reads CSSCDRDKKP…LQQGRDVTRL (386 aa). Residues serine 52 and serine 63 each carry the phosphoserine modification. At tyrosine 107 the chain carries Phosphotyrosine; by LYN. Serine 157 carries the post-translational modification Phosphoserine. A phosphotyrosine mark is found at tyrosine 165, tyrosine 183, and tyrosine 224. Positions 194 to 347 are disordered; the sequence is DKSQGGKSKS…GPPQRSSSSC (154 aa). Over residues 215-230 the composition is skewed to basic and acidic residues; it reads AEGKADFAEYASVDRN. Position 226 is a phosphoserine (serine 226). The segment covering 236-247 has biased composition (polar residues); it reads STNAESILGTSS. Tyrosine 314 carries the post-translational modification Phosphotyrosine; by FYN and LYN. Positions 314 to 317 are interaction with CSK; that stretch reads YSSV. The span at 331–347 shows a compositional bias: polar residues; it reads STCQCPQGPPQRSSSSC. The residue at position 346 (serine 346) is a Phosphoserine. Phosphotyrosine occurs at positions 351, 381, and 409. The interval 361–424 is disordered; that stretch reads PNSISMLPPA…LQQGRDVTRL (64 aa). Residues 422–424 are interaction with NHERF1; that stretch reads TRL.

As to quaternary structure, interacts with NHERF1/EBP50. In resting T-cells, part of a PAG1-NHERF1-MSN complex which is disrupted upon TCR activation. When phosphorylated, interacts with CSK. Identified in a complex with LYN and STAT3. Interacts with LYN. In terms of processing, palmitoylated. Phosphorylated by FYN on Tyr-314 in resting T-cells; which promotes interaction with CSK. Dephosphorylated by PTPRC/CD45 upon TCR activation; which leads to CSK dissociation. May also be dephosphorylated by PTPN11. Hyperphosphorylated in mast cells upon FCER1 activation. Phosphorylated by LYN in response to EPO. Ubiquitously expressed, with highest levels in developing brain, lung, thymus, spleen and testis. Present in mast cells.

It is found in the cell membrane. Its function is as follows. Negatively regulates TCR (T-cell antigen receptor)-mediated signaling in T-cells and FCER1 (high affinity immunoglobulin epsilon receptor)-mediated signaling in mast cells. Promotes CSK activation and recruitment to lipid rafts, which results in LCK inhibition. Inhibits immunological synapse formation by preventing dynamic arrangement of lipid raft proteins. May be involved in cell adhesion signaling. In Rattus norvegicus (Rat), this protein is Phosphoprotein associated with glycosphingolipid-enriched microdomains 1 (Pag1).